Consider the following 596-residue polypeptide: Selenocysteine-specific elongation factor (596 aa).

The 213-residue stretch at 5–217 (RVNVNVGVLG…LLTSQISIPT (213 aa)) folds into the tr-type G domain. The tract at residues 14–21 (GHIDSGKT) is G1. Positions 19, 21, and 22 each coordinate GDP. GTP contacts are provided by G19, T21, and A22. T21 is a Mg(2+) binding site. A G2 region spans residues 46 to 50 (GITLD). Mg(2+)-binding residues include T48 and D92. Residues 92 to 95 (DCPG) are G3. The tract at residues 146–149 (NKID) is G4. Residues D149 and K187 each coordinate GDP. GTP is bound by residues D149 and K187. Residues 185 to 187 (AAK) form a G5 region. At S537 the chain carries Phosphoserine. Position 545 is a phosphothreonine (T545). The short motif at 547 to 553 (ALKKRAR) is the Nuclear localization signal element. Positions 548–573 (LKKRARAGRGEATRQEESAERSEPSQ) are disordered. Residues 555–571 (GRGEATRQEESAERSEP) are compositionally biased toward basic and acidic residues. Residue R556 is modified to Omega-N-methylarginine.

Belongs to the TRAFAC class translation factor GTPase superfamily. Classic translation factor GTPase family. SelB subfamily. The cofactor is Mg(2+). Mn(2+) is required as a cofactor.

The protein resides in the cytoplasm. Its subcellular location is the nucleus. It carries out the reaction GTP + H2O = GDP + phosphate + H(+). In terms of biological role, translation factor required for the incorporation of the rare amino acid selenocysteine encoded by UGA codons. Replaces the eRF1-eRF3-GTP ternary complex for the insertion of selenocysteine directed by the UGA codon. Insertion of selenocysteine at UGA codons is mediated by SECISBP2 and EEFSEC: SECISBP2 (1) specifically binds the SECIS sequence once the 80S ribosome encounters an in-frame UGA codon and (2) contacts the RPS27A/eS31 of the 40S ribosome before ribosome stalling. (3) GTP-bound EEFSEC then delivers selenocysteinyl-tRNA(Sec) to the 80S ribosome and adopts a preaccommodated state conformation. (4) After GTP hydrolysis, EEFSEC dissociates from the assembly, selenocysteinyl-tRNA(Sec) accommodates, and peptide bond synthesis and selenoprotein elongation occur. In Homo sapiens (Human), this protein is Selenocysteine-specific elongation factor.